The primary structure comprises 122 residues: Large ribosomal subunit protein uL22 (122 aa).

Positions 103-122 (VEGKEMKSSKSHKKNQAEGK) are disordered.

This sequence belongs to the universal ribosomal protein uL22 family. Part of the 50S ribosomal subunit.

Its function is as follows. This protein binds specifically to 23S rRNA; its binding is stimulated by other ribosomal proteins, e.g. L4, L17, and L20. It is important during the early stages of 50S assembly. It makes multiple contacts with different domains of the 23S rRNA in the assembled 50S subunit and ribosome. The globular domain of the protein is located near the polypeptide exit tunnel on the outside of the subunit, while an extended beta-hairpin is found that lines the wall of the exit tunnel in the center of the 70S ribosome. This is Large ribosomal subunit protein uL22 from Helicobacter pylori (strain P12).